A 138-amino-acid chain; its full sequence is Large ribosomal subunit protein uL16 (138 aa).

Residues M1–Q13 are compositionally biased toward basic residues. Positions M1–T22 are disordered.

Belongs to the universal ribosomal protein uL16 family. In terms of assembly, part of the 50S ribosomal subunit.

Its function is as follows. Binds 23S rRNA and is also seen to make contacts with the A and possibly P site tRNAs. The polypeptide is Large ribosomal subunit protein uL16 (Paraburkholderia phymatum (strain DSM 17167 / CIP 108236 / LMG 21445 / STM815) (Burkholderia phymatum)).